Reading from the N-terminus, the 358-residue chain is Photosystem II protein D1 2 (358 aa).

The next 3 helical transmembrane spans lie at 28-45, 117-132, and 141-155; these read YVGWFGVLMIPCLLAATI, HFLIGISAYMGRQWEL, and WICVAYSAPLSAAMA. His117 contributes to the chlorophyll a binding site. Tyr125 contacts pheophytin a. [CaMn4O5] cluster-binding residues include Asp169 and Glu188. A helical membrane pass occupies residues 196–217; the sequence is FHMLGVAGVFGGSLFSAMHGSL. Position 197 (His197) interacts with chlorophyll a. A quinone contacts are provided by residues His214 and 263–264; that span reads SF. His214 contributes to the Fe cation binding site. His271 contacts Fe cation. The chain crosses the membrane as a helical span at residues 273–287; the sequence is FLGAWPVVGIWFTSM. [CaMn4O5] cluster is bound by residues His331, Glu332, Asp341, and Ala343. A propeptide spanning residues 344–358 is cleaved from the precursor; that stretch reads TVESTPVALQAPAIG.

It belongs to the reaction center PufL/M/PsbA/D family. In terms of assembly, PSII is composed of 1 copy each of membrane proteins PsbA, PsbB, PsbC, PsbD, PsbE, PsbF, PsbH, PsbI, PsbJ, PsbK, PsbL, PsbM, PsbT, PsbX, PsbY, PsbZ, Psb30/Ycf12, peripheral proteins PsbO, CyanoQ (PsbQ), PsbU, PsbV and a large number of cofactors. It forms dimeric complexes. The D1/D2 heterodimer binds P680, chlorophylls that are the primary electron donor of PSII, and subsequent electron acceptors. It shares a non-heme iron and each subunit binds pheophytin, quinone, additional chlorophylls, carotenoids and lipids. D1 provides most of the ligands for the Mn4-Ca-O5 cluster of the oxygen-evolving complex (OEC). There is also a Cl(-1) ion associated with D1 and D2, which is required for oxygen evolution. The PSII complex binds additional chlorophylls, carotenoids and specific lipids. serves as cofactor. Post-translationally, tyr-160 forms a radical intermediate that is referred to as redox-active TyrZ, YZ or Y-Z. C-terminally processed by CtpA; processing is essential to allow assembly of the oxygen-evolving complex and thus photosynthetic growth.

Its subcellular location is the cellular thylakoid membrane. It catalyses the reaction 2 a plastoquinone + 4 hnu + 2 H2O = 2 a plastoquinol + O2. Photosystem II (PSII) is a light-driven water:plastoquinone oxidoreductase that uses light energy to abstract electrons from H(2)O, generating O(2) and a proton gradient subsequently used for ATP formation. It consists of a core antenna complex that captures photons, and an electron transfer chain that converts photonic excitation into a charge separation. The D1/D2 (PsbA/PsbD) reaction center heterodimer binds P680, the primary electron donor of PSII as well as several subsequent electron acceptors. The sequence is that of Photosystem II protein D1 2 from Parasynechococcus marenigrum (strain WH8102).